Consider the following 710-residue polypeptide: Zinc finger and BTB domain-containing protein 24 (710 aa).

Residues 37–103 (CDITLIVENV…IYTGYLHASE (67 aa)) enclose the BTB domain. Disordered stretches follow at residues 134–176 (APKP…EGRS) and 202–256 (EEDS…SRRR). The segment at residues 159-171 (KRKRGRPRKANGL) is a DNA-binding region (a.T hook). 2 stretches are compositionally biased toward basic and acidic residues: residues 202-219 (EEDSVKLSEQTPEDKESE) and 231-244 (PAEKDENFDPKAGD). 8 consecutive C2H2-type zinc fingers follow at residues 293-315 (ARCKDCDRVFKYSHFLAIHQRRH), 321-343 (FKCNECGKGFAQKHSLQVHTRMH), 349-371 (YTCTVCGKALTTKHSLLEHMSLH), 377-399 (FTCDQCGKYFSQKRQLKSHYRVH), 405-427 (PECSHCHRKFMDVSQLKKHLRTH), 433-455 (FTCEICGKSFTAKSSLQTHIRIH), 461-483 (YSCSICGKCFSDSSAKRRHCILH), and 489-511 (FSCPECGLQFARLDNLKAHLKIH). Residues 651 to 676 (EQTTSSVPAADTGARATPVPSTRPGA) are disordered.

Belongs to the krueppel C2H2-type zinc-finger protein family. Interacts with MN1. Widely expressed. Highest level in liver, testis and kidney.

It is found in the nucleus. In terms of biological role, may be involved in BMP2-induced transcription. The sequence is that of Zinc finger and BTB domain-containing protein 24 (Zbtb24) from Mus musculus (Mouse).